The sequence spans 119 residues: Phosphoribosyl-AMP cyclohydrolase (119 aa).

Asp-77 is a Mg(2+) binding site. Residue Cys-78 participates in Zn(2+) binding. Mg(2+) contacts are provided by Asp-79 and Asp-81. Zn(2+) is bound by residues Cys-94 and Cys-101.

It belongs to the PRA-CH family. As to quaternary structure, homodimer. It depends on Mg(2+) as a cofactor. Requires Zn(2+) as cofactor.

It localises to the cytoplasm. It catalyses the reaction 1-(5-phospho-beta-D-ribosyl)-5'-AMP + H2O = 1-(5-phospho-beta-D-ribosyl)-5-[(5-phospho-beta-D-ribosylamino)methylideneamino]imidazole-4-carboxamide. Its pathway is amino-acid biosynthesis; L-histidine biosynthesis; L-histidine from 5-phospho-alpha-D-ribose 1-diphosphate: step 3/9. In terms of biological role, catalyzes the hydrolysis of the adenine ring of phosphoribosyl-AMP. This Cereibacter sphaeroides (strain KD131 / KCTC 12085) (Rhodobacter sphaeroides) protein is Phosphoribosyl-AMP cyclohydrolase.